Reading from the N-terminus, the 152-residue chain is Endoribonuclease YbeY (152 aa).

The Zn(2+) site is built by His118, His122, and His128.

The protein belongs to the endoribonuclease YbeY family. It depends on Zn(2+) as a cofactor.

It localises to the cytoplasm. Its function is as follows. Single strand-specific metallo-endoribonuclease involved in late-stage 70S ribosome quality control and in maturation of the 3' terminus of the 16S rRNA. The chain is Endoribonuclease YbeY from Lacticaseibacillus paracasei (strain ATCC 334 / BCRC 17002 / CCUG 31169 / CIP 107868 / KCTC 3260 / NRRL B-441) (Lactobacillus paracasei).